The following is a 349-amino-acid chain: RxLR effector protein CRE15 (349 aa).

The signal sequence occupies residues 1–33; the sequence is MITFKRLSSARWGALLTSIAVLFFLAITKGADA. Residues 46–62 carry the RxLR-dEER motif; sequence RRLRTTTADAYYASEDR.

Belongs to the RxLR effector family. Interacts directly with the potato ortholog of vascular highway 1 (VH1)-interacting kinase (VIK), encoding a predicted MEK kinase (MAP3K).

It is found in the secreted. It localises to the host cell membrane. In terms of biological role, effector that promotes P.infestans virulence in Nicotiana benthamiana and potato. Attenuates cell death triggered by the pathogen-associated molecular pattern infestin 1 (INF1), indicating that the effector suppresses pattern-triggered immunity. However, it does not attenuate cell death triggered by a range of resistance proteins, suggesting that it specifically suppresses INF1-triggered cell death (ICD). Targets host MAP3K VIK in order to utilize or promote its ability to negatively regulate immunity. The chain is RxLR effector protein CRE15 from Phytophthora infestans (strain T30-4) (Potato late blight agent).